We begin with the raw amino-acid sequence, 269 residues long: Ribonuclease HII (269 aa).

Residues 28 to 222 (RHVAGADEAG…VSGRRGAPPR (195 aa)) form the RNase H type-2 domain. A divalent metal cation is bound by residues D34, E35, and D128.

The protein belongs to the RNase HII family. It depends on Mn(2+) as a cofactor. Mg(2+) is required as a cofactor.

It localises to the cytoplasm. It catalyses the reaction Endonucleolytic cleavage to 5'-phosphomonoester.. Its function is as follows. Endonuclease that specifically degrades the RNA of RNA-DNA hybrids. In Salinispora arenicola (strain CNS-205), this protein is Ribonuclease HII.